The chain runs to 428 residues: Cholecystokinin receptor type A (428 aa).

Topologically, residues M1–P41 are extracellular. Residues N10 and N24 are each glycosylated (N-linked (GlcNAc...) asparagine). C18 and C29 are joined by a disulfide. A helical transmembrane segment spans residues A42 to I67. Over R68–N77 the chain is Cytoplasmic. The chain crosses the membrane as a helical span at residues I78–L104. Topologically, residues K105 to K115 are extracellular. C114 and C196 are oxidised to a cystine. Residues T116–L137 form a helical membrane-spanning segment. Over E138 to H157 the chain is Cytoplasmic. A helical transmembrane segment spans residues A158 to I178. Residues Y179–H210 are Extracellular-facing. N-linked (GlcNAc...) asparagine glycosylation is present at N190. The helical transmembrane segment at T211–L234 threads the bilayer. Over E235–R313 the chain is Cytoplasmic. The interval A250–C269 is disordered. The helical transmembrane segment at M314–A334 threads the bilayer. Residues W335 to G349 are Extracellular-facing. Residues T350 to M373 form a helical membrane-spanning segment. At N374–P428 the chain is on the cytoplasmic side. C387 carries the S-palmitoyl cysteine lipid modification. Residues P393–P428 form a disordered region. Residues T409–S422 are compositionally biased toward polar residues.

It belongs to the G-protein coupled receptor 1 family.

It localises to the cell membrane. Functionally, receptor for cholecystokinin. Mediates pancreatic growth and enzyme secretion, smooth muscle contraction of the gall bladder and stomach. Has a 1000-fold higher affinity for CCK rather than for gastrin. It modulates feeding and dopamine-induced behavior in the central and peripheral nervous system. This receptor mediates its action by association with G proteins that activate a phosphatidylinositol-calcium second messenger system. In Canis lupus familiaris (Dog), this protein is Cholecystokinin receptor type A (CCKAR).